Consider the following 410-residue polypeptide: MAREKFERVKPHVNIGTIGHVDHGKTTLTAAITMALASVSGKKGKKYDDIDSAPEEKARGITINTAHVEYETETRHYAHVDCPGHADYVKNMITGAAQMDGAILVVSGADGPMPQTKEHLLLAKQVGVPSIVVFLNKEDQVDDEELLELVELEIREMLDTYDFPGDSTPIIKGSALMALQALMETDEMSRGSNPWVDKILTLMDNVDEYIPTPERETDKPFLMAVEDVFSITGRGTVATGRVERGGVKIGDVVEIVGLRETRSTTVTGLEMFQKMLQESIAGDNVGMLLRGIQKADIQRGMVVAQPGSITPHVSFDAQVYILTKEEGGRHTPFFKGYRPQFYVRTTDVTGKIESLKSDEDNTEMRMVVPGDRVTMSVELVQPIAIEKGMRFAIREGGRTVGAGVVSNVVS.

The 205-residue stretch at 10–214 folds into the tr-type G domain; it reads KPHVNIGTIG…NVDEYIPTPE (205 aa). The tract at residues 19–26 is G1; the sequence is GHVDHGKT. Position 19 to 26 (19 to 26) interacts with GTP; the sequence is GHVDHGKT. Thr-26 provides a ligand contact to Mg(2+). Positions 60–64 are G2; sequence GITIN. The G3 stretch occupies residues 81-84; sequence DCPG. Residues 81 to 85 and 136 to 139 contribute to the GTP site; these read DCPGH and NKED. The tract at residues 136-139 is G4; the sequence is NKED. The tract at residues 174 to 176 is G5; sequence SAL.

This sequence belongs to the TRAFAC class translation factor GTPase superfamily. Classic translation factor GTPase family. EF-Tu/EF-1A subfamily.

The protein localises to the plastid. It localises to the chloroplast stroma. The enzyme catalyses GTP + H2O = GDP + phosphate + H(+). Functionally, GTP hydrolase that promotes the GTP-dependent binding of aminoacyl-tRNA to the A-site of ribosomes during protein biosynthesis. This is Elongation factor Tu, chloroplastic (tufA) from Bigelowiella natans (Pedinomonas minutissima).